The sequence spans 325 residues: Tetraacyldisaccharide 4'-kinase (325 aa).

Position 55-62 (55-62 (TAGGNGKT)) interacts with ATP.

This sequence belongs to the LpxK family.

It catalyses the reaction a lipid A disaccharide + ATP = a lipid IVA + ADP + H(+). It functions in the pathway glycolipid biosynthesis; lipid IV(A) biosynthesis; lipid IV(A) from (3R)-3-hydroxytetradecanoyl-[acyl-carrier-protein] and UDP-N-acetyl-alpha-D-glucosamine: step 6/6. Its function is as follows. Transfers the gamma-phosphate of ATP to the 4'-position of a tetraacyldisaccharide 1-phosphate intermediate (termed DS-1-P) to form tetraacyldisaccharide 1,4'-bis-phosphate (lipid IVA). The protein is Tetraacyldisaccharide 4'-kinase of Salmonella heidelberg (strain SL476).